A 429-amino-acid polypeptide reads, in one-letter code: Glutamate-1-semialdehyde 2,1-aminomutase 2 (429 aa).

Lys-268 is modified (N6-(pyridoxal phosphate)lysine).

Belongs to the class-III pyridoxal-phosphate-dependent aminotransferase family. HemL subfamily. In terms of assembly, homodimer. It depends on pyridoxal 5'-phosphate as a cofactor.

Its subcellular location is the cytoplasm. The enzyme catalyses (S)-4-amino-5-oxopentanoate = 5-aminolevulinate. Its pathway is porphyrin-containing compound metabolism; protoporphyrin-IX biosynthesis; 5-aminolevulinate from L-glutamyl-tRNA(Glu): step 2/2. The polypeptide is Glutamate-1-semialdehyde 2,1-aminomutase 2 (Bacillus anthracis (strain A0248)).